Reading from the N-terminus, the 464-residue chain is Protein FAM90A13 (464 aa).

Disordered regions lie at residues 1–42, 69–389, and 411–437; these read MMAR…DPRL, VPAT…HDGA, and APSFHSPEKPGAFLAQSPHVSEKSEAP. 2 stretches are compositionally biased toward basic and acidic residues: residues 74–89 and 97–114; these read GKKEGKENLKPWKPRG and NKDKGEKEERPRQQDPQR. Residues 180–197 are compositionally biased toward low complexity; sequence LASLSPLRKASLSSSSSL.

This sequence belongs to the FAM90 family.

The sequence is that of Protein FAM90A13 from Homo sapiens (Human).